A 472-amino-acid chain; its full sequence is Acyltransferase PapA3 (472 aa).

Belongs to the PapA acyltransferase family.

The enzyme catalyses a long-chain fatty acyl-CoA + alpha,alpha-trehalose = a 2-O-(long-chain fatty acyl)-alpha,alpha-trehalose + CoA. It carries out the reaction a mycolipenoyl-CoA + a 2-O-(long-chain fatty acyl)-alpha,alpha-trehalose = a 2-O-(long-chain fatty acyl)-3-O-mycolipenoyl-trehalose + CoA. The catalysed reaction is alpha,alpha-trehalose + hexadecanoyl-CoA = 2-O-hexadecanoyl-alpha,alpha-trehalose + CoA. It catalyses the reaction 2-O-hexadecanoyl-alpha,alpha-trehalose + hexadecanoyl-CoA = 2-O,3-O-dihexadecanoyl-alpha,alpha-trehalose + CoA. In terms of biological role, involved in the biosynthesis of polyacyltrehalose (PAT), a pentaacylated, trehalose-based glycolipid that could have a role in anchoring the bacterial capsule. Catalyzes the sequential transfer of two palmitoyl groups onto a single glucose residue of trehalose generating the diacylated product 2,3-diacyltrehalose (trehalose dipalmitate). The protein is Acyltransferase PapA3 (papA3) of Mycobacterium tuberculosis (strain CDC 1551 / Oshkosh).